The chain runs to 635 residues: Arabinoxylan arabinofuranohydrolase (635 aa).

The first 26 residues, 1 to 26 (MIRKCLVLFLSFALLLSVFPMLNVDA), serve as a signal peptide directing secretion. The Proton acceptor role is filled by Asp-49. Glu-248 functions as the Proton donor in the catalytic mechanism. Asn-311 serves as a coordination point for substrate. CBM6 domains lie at 379–508 (TRVE…WQFT) and 517–634 (TKVE…IEFS). Residues Glu-382, Glu-384, Asn-406, Leu-407, Asp-503, Glu-520, Glu-522, Asp-539, Tyr-544, Asp-620, Trp-624, Asp-625, and Asp-629 each coordinate Ca(2+).

This sequence belongs to the glycosyl hydrolase 43 family.

The protein localises to the secreted. It carries out the reaction Hydrolysis of terminal non-reducing alpha-L-arabinofuranoside residues in alpha-L-arabinosides.. The protein operates within glycan degradation; xylan degradation. Activated by calcium and magnesium. Inhibited by copper. Functionally, cleaves arabinose units from O-2- or O-3-monosubstituted xylose residues, thereby assisting in arabinoxylan (AX) and short-chain arabinoxylo-oligosaccharide (AXOS) degradation. Preferres wheat flour xylan over oat spelt xylan as substrate. Does not display endoxylanase activity. This chain is Arabinoxylan arabinofuranohydrolase (xynD), found in Paenibacillus polymyxa (Bacillus polymyxa).